A 118-amino-acid polypeptide reads, in one-letter code: Large ribosomal subunit protein bL20 (118 aa).

The protein belongs to the bacterial ribosomal protein bL20 family.

Binds directly to 23S ribosomal RNA and is necessary for the in vitro assembly process of the 50S ribosomal subunit. It is not involved in the protein synthesizing functions of that subunit. This chain is Large ribosomal subunit protein bL20, found in Staphylococcus aureus (strain Mu3 / ATCC 700698).